Here is a 176-residue protein sequence, read N- to C-terminus: N-alpha-acetyltransferase NAT5 (176 aa).

Residues 14-176 (NNLGMLTKLA…DAILLKKHIS (163 aa)) form the N-acetyltransferase domain.

It belongs to the acetyltransferase family. In terms of assembly, component of the N-terminal acetyltransferase A (NatA) complex, which is composed of ARD1, NAT1 and NAT5.

It is found in the cytoplasm. It carries out the reaction N-terminal L-methionyl-L-alanyl-[protein] + acetyl-CoA = N-terminal N(alpha)-acetyl-L-methionyl-L-alanyl-[protein] + CoA + H(+). The enzyme catalyses N-terminal L-methionyl-L-seryl-[protein] + acetyl-CoA = N-terminal N(alpha)-acetyl-L-methionyl-L-seryl-[protein] + CoA + H(+). It catalyses the reaction N-terminal L-methionyl-L-valyl-[protein] + acetyl-CoA = N-terminal N(alpha)-acetyl-L-methionyl-L-valyl-[protein] + CoA + H(+). The catalysed reaction is N-terminal L-methionyl-L-threonyl-[protein] + acetyl-CoA = N-terminal N(alpha)-acetyl-L-methionyl-L-threonyl-[protein] + CoA + H(+). It carries out the reaction N-terminal L-methionyl-L-lysyl-[protein] + acetyl-CoA = N-terminal N(alpha)-acetyl-L-methionyl-L-lysyl-[protein] + CoA + H(+). The enzyme catalyses N-terminal L-methionyl-L-leucyl-[protein] + acetyl-CoA = N-terminal N(alpha)-acetyl-L-methionyl-L-leucyl-[protein] + CoA + H(+). It catalyses the reaction N-terminal L-methionyl-L-phenylalanyl-[protein] + acetyl-CoA = N-terminal N(alpha)-acetyl-L-methionyl-L-phenylalanyl-[protein] + CoA + H(+). The catalysed reaction is N-terminal L-methionyl-L-tyrosyl-[protein] + acetyl-CoA = N-terminal N(alpha)-acetyl-L-methionyl-L-tyrosyl-[protein] + CoA + H(+). N-alpha-acetyltransferase that acetylates the N-terminus of proteins that retain their initiating methionine. Has a broad substrate specificity: able to acetylate the initiator methionine of most peptides. Non-essential component of the NatA N-terminal acetyltransferase. In Saccharomyces cerevisiae (strain ATCC 204508 / S288c) (Baker's yeast), this protein is N-alpha-acetyltransferase NAT5.